A 299-amino-acid chain; its full sequence is Taste receptor type 2 member 50 (299 aa).

A topological domain (extracellular) is located at residue M1. Residues 2–22 (ITFLYIFFSILIMVLFVLGNF) form a helical membrane-spanning segment. At 23 to 55 (ANGFIALVNFIDWVKRKKISSADQILTALAVSR) the chain is on the cytoplasmic side. The helical transmembrane segment at 56–76 (IGLLWALLLNWYLTVLNPAFY) threads the bilayer. At 77–87 (SVELRITSYNA) the chain is on the extracellular side. A helical transmembrane segment spans residues 88 to 108 (WVVTNHFSMWLAANLSIFYLL). The Cytoplasmic portion of the chain corresponds to 109 to 126 (KIANFSNLLFLHLKRRVR). A helical membrane pass occupies residues 127-147 (SVILVILLGTLIFLVCHLLVA). Topologically, residues 148–181 (NMDESMWAEEYEGNMTGKMKLRNTVHLSYLTVTT) are extracellular. N161 is a glycosylation site (N-linked (GlcNAc...) asparagine). A helical membrane pass occupies residues 182 to 202 (LWSFIPFTLSLISFLMLICSL). Topologically, residues 203 to 229 (CKHLKKMQLHGEGSQDLSTKVHIKALQ) are cytoplasmic. Residues 230–250 (TLISFLLLCAIFFLFLIVSVW) form a helical membrane-spanning segment. Residues 251-259 (SPRRLRNDP) are Extracellular-facing. Residues 260–280 (VVMVSKAVGNIYLAFDSFILI) form a helical membrane-spanning segment. Residues 281 to 299 (WRTKKLKHTFLLILCQIRC) are Cytoplasmic-facing.

This sequence belongs to the G-protein coupled receptor T2R family. Expressed in subsets of taste receptor cells of the tongue and exclusively in gustducin-positive cells.

It is found in the membrane. Its function is as follows. Receptor that may play a role in the perception of bitterness and is gustducin-linked. May play a role in sensing the chemical composition of the gastrointestinal content. The activity of this receptor may stimulate alpha gustducin, mediate PLC-beta-2 activation and lead to the gating of TRPM5. In Homo sapiens (Human), this protein is Taste receptor type 2 member 50 (TAS2R50).